A 578-amino-acid polypeptide reads, in one-letter code: Adenine deaminase (578 aa).

The protein belongs to the metallo-dependent hydrolases superfamily. Adenine deaminase family. Requires Mn(2+) as cofactor.

It catalyses the reaction adenine + H2O + H(+) = hypoxanthine + NH4(+). This is Adenine deaminase from Ligilactobacillus salivarius (strain UCC118) (Lactobacillus salivarius).